Reading from the N-terminus, the 243-residue chain is UPF0246 protein SEQ_2141 (243 aa).

Belongs to the UPF0246 family.

This chain is UPF0246 protein SEQ_2141, found in Streptococcus equi subsp. equi (strain 4047).